The chain runs to 203 residues: MGSQWTKDNVYRKAMRDGYRARSAYKLIDINERFNVIRQTDNVVDLGAAPGSWLQVLKTMTEGQLCGVDLNPIIPLENVITITGDFTDPAIQAKIREAMPLVNVVVCDASPHLSGAKAYDQARVMGLNEEALNFASNLLKQGGNLVMKSFQGSDFNELLALVKEKFYSVRVIRSTATRRGSTECYIVAKNFIGDADDDRKKRE.

S-adenosyl-L-methionine contacts are provided by G51, W53, D69, D85, and D108. The active-site Proton acceptor is the K148.

It belongs to the class I-like SAM-binding methyltransferase superfamily. RNA methyltransferase RlmE family.

The protein resides in the cytoplasm. The enzyme catalyses uridine(2552) in 23S rRNA + S-adenosyl-L-methionine = 2'-O-methyluridine(2552) in 23S rRNA + S-adenosyl-L-homocysteine + H(+). Its function is as follows. Specifically methylates the uridine in position 2552 of 23S rRNA at the 2'-O position of the ribose in the fully assembled 50S ribosomal subunit. The polypeptide is Ribosomal RNA large subunit methyltransferase E (Methanocorpusculum labreanum (strain ATCC 43576 / DSM 4855 / Z)).